The sequence spans 393 residues: Beta-1,3-galactosyltransferase 7 (393 aa).

Residues 9 to 29 form a helical; Signal-anchor for type II membrane protein membrane-spanning segment; sequence VISLKWVPFLCISFFALGAIF. The interval 89 to 112 is disordered; that stretch reads SLDKSVSTLSSTRSSQEMVDGSET. The segment covering 93-103 has biased composition (low complexity); that stretch reads SVSTLSSTRSS.

This sequence belongs to the glycosyltransferase 31 family. It depends on Mn(2+) as a cofactor. As to expression, expressed in leaves, stems, flowers and siliques.

The protein resides in the golgi apparatus membrane. Its pathway is protein modification; protein glycosylation. Functionally, beta-1,3-galactosyltransferase that transfers galactose from UDP-galactose to substrates with a terminal glycosyl residue. In Arabidopsis thaliana (Mouse-ear cress), this protein is Beta-1,3-galactosyltransferase 7 (B3GALT7).